Reading from the N-terminus, the 381-residue chain is Hydrogenase nickel incorporation protein HupN (381 aa).

Topologically, residues 1 to 39 are cytoplasmic; it reads MLPFSMTGLEKDHTRGVLILANAHRRSERSRTASCAGPA. The helical transmembrane segment at 40–60 threads the bilayer; sequence VLFGGLITANIVAWAWAFALF. At 61-63 the chain is on the periplasmic side; it reads ADR. Residues 64-84 traverse the membrane as a helical segment; that stretch reads PVVMATALLAWVFGLRHAVDA. At 85–110 the chain is on the cytoplasmic side; sequence DHIAAIDNVVRSLMQTGGTPRSAGLY. The helical transmembrane segment at 111 to 131 threads the bilayer; that stretch reads FALGHSSVVVVATMLLALGVV. Residues 132 to 149 lie on the Periplasmic side of the membrane; the sequence is SLGGDGLLKEIGSFIGAS. Residues 150 to 170 traverse the membrane as a helical segment; sequence VSALFLLVIAAINLAIFASLW. Residues 171 to 215 are Cytoplasmic-facing; it reads RTFRKAREQGIRDAAGLDALLAHRGILVRLLGPMFRLVTKPWHMY. The helical transmembrane segment at 216–236 threads the bilayer; it reads PLGFLFGLGFDTATEIGLLSI. At 237 to 243 the chain is on the periplasmic side; the sequence is SASEAAR. A helical transmembrane segment spans residues 244–264; that stretch reads GASLADVMVFPALFAAGMALV. Residues 265 to 292 lie on the Cytoplasmic side of the membrane; it reads DTADSTLMVSAYRWAFVDPMRKLWYNLT. Residues 293–313 form a helical membrane-spanning segment; it reads ITGASVAVALFIGGIEALGLI. Over 314–333 the chain is Periplasmic; the sequence is GNRLDLSGGVWTLIDALNES. Residues 334-354 traverse the membrane as a helical segment; it reads LANVGLAVIALFAIAWLLSIV. At 355-381 the chain is on the cytoplasmic side; the sequence is LYRRLIAGSSGLADTEVLECADATEAV.

This sequence belongs to the NiCoT transporter (TC 2.A.52) family.

It localises to the cell inner membrane. In terms of biological role, involved in nickel incorporation/metabolism into the hydrogenase apoprotein. The polypeptide is Hydrogenase nickel incorporation protein HupN (hupN) (Bradyrhizobium diazoefficiens (strain JCM 10833 / BCRC 13528 / IAM 13628 / NBRC 14792 / USDA 110)).